Here is a 191-residue protein sequence, read N- to C-terminus: UPF0312 protein Sbal195_3198 (191 aa).

A signal peptide spans 1–22 (MKKQLFSALIGASLLAPMAASA).

It belongs to the UPF0312 family. Type 1 subfamily.

It localises to the periplasm. This is UPF0312 protein Sbal195_3198 from Shewanella baltica (strain OS195).